The following is a 487-amino-acid chain: Aspartyl/glutamyl-tRNA(Asn/Gln) amidotransferase subunit B (487 aa).

This sequence belongs to the GatB/GatE family. GatB subfamily. Heterotrimer of A, B and C subunits.

The enzyme catalyses L-glutamyl-tRNA(Gln) + L-glutamine + ATP + H2O = L-glutaminyl-tRNA(Gln) + L-glutamate + ADP + phosphate + H(+). It carries out the reaction L-aspartyl-tRNA(Asn) + L-glutamine + ATP + H2O = L-asparaginyl-tRNA(Asn) + L-glutamate + ADP + phosphate + 2 H(+). Its function is as follows. Allows the formation of correctly charged Asn-tRNA(Asn) or Gln-tRNA(Gln) through the transamidation of misacylated Asp-tRNA(Asn) or Glu-tRNA(Gln) in organisms which lack either or both of asparaginyl-tRNA or glutaminyl-tRNA synthetases. The reaction takes place in the presence of glutamine and ATP through an activated phospho-Asp-tRNA(Asn) or phospho-Glu-tRNA(Gln). This Roseiflexus sp. (strain RS-1) protein is Aspartyl/glutamyl-tRNA(Asn/Gln) amidotransferase subunit B.